We begin with the raw amino-acid sequence, 176 residues long: Large ribosomal subunit protein uL6 (176 aa).

It belongs to the universal ribosomal protein uL6 family. In terms of assembly, part of the 50S ribosomal subunit.

Its function is as follows. This protein binds to the 23S rRNA, and is important in its secondary structure. It is located near the subunit interface in the base of the L7/L12 stalk, and near the tRNA binding site of the peptidyltransferase center. This Burkholderia ambifaria (strain ATCC BAA-244 / DSM 16087 / CCUG 44356 / LMG 19182 / AMMD) (Burkholderia cepacia (strain AMMD)) protein is Large ribosomal subunit protein uL6.